An 897-amino-acid chain; its full sequence is 3'-5' exonuclease DinG (897 aa).

An Exonuclease domain is found at 8-161 (VVDLETTGNQ…DEDAATTAKL (154 aa)). Residues 241–496 (SKAVDQLGLT…KAIDQLEKQR (256 aa)) enclose the Helicase ATP-binding domain. 276–283 (ASLGSGKS) lines the ATP pocket. A DEAH box motif is present at residues 448–451 (DEAH). In terms of domain architecture, Helicase C-terminal spans 703-893 (NIDEYVASIV…QFGKLLRQIQ (191 aa)).

This sequence belongs to the helicase family. DinG subfamily. Type 2 sub-subfamily. Monomer in solution.

With respect to regulation, the nuclease activity is inhibited by ATP or ADP. Its function is as follows. 3'-5' exonuclease acting on single-stranded DNA (ssDNA) and RNA (ssRNA) substrates. Displays ssDNA-stimulated ATPase activity, but lacks helicase activity. In Staphylococcus aureus (strain MRSA252), this protein is 3'-5' exonuclease DinG.